Consider the following 32-residue polypeptide: Calcitonin (32 aa).

Cysteines 1 and 7 form a disulfide. Pro32 bears the Proline amide mark.

It belongs to the calcitonin family.

The protein resides in the secreted. Its function is as follows. Calcitonin is a peptide hormone that causes a rapid but short-lived drop in the level of calcium and phosphate in blood by promoting the incorporation of those ions in the bones. Calcitonin function is mediated by the calcitonin receptor/CALCR and the CALCR-RAMP2 (AMYR2) receptor complex. The protein is Calcitonin (CALCA) of Sus scrofa (Pig).